A 277-amino-acid polypeptide reads, in one-letter code: Sulfur carrier protein FdhD (277 aa).

Catalysis depends on Cys121, which acts as the Cysteine persulfide intermediate. Residue 260 to 265 (FCKPGR) participates in Mo-bis(molybdopterin guanine dinucleotide) binding.

The protein belongs to the FdhD family.

It localises to the cytoplasm. Functionally, required for formate dehydrogenase (FDH) activity. Acts as a sulfur carrier protein that transfers sulfur from IscS to the molybdenum cofactor prior to its insertion into FDH. In Escherichia coli O6:H1 (strain CFT073 / ATCC 700928 / UPEC), this protein is Sulfur carrier protein FdhD.